The primary structure comprises 227 residues: Phosphoglycolate phosphatase (227 aa).

Residue Asp13 is the Nucleophile of the active site. Residues Asp13, Asp15, and Asp176 each coordinate Mg(2+).

It belongs to the HAD-like hydrolase superfamily. CbbY/CbbZ/Gph/YieH family. Requires Mg(2+) as cofactor.

The catalysed reaction is 2-phosphoglycolate + H2O = glycolate + phosphate. The protein operates within organic acid metabolism; glycolate biosynthesis; glycolate from 2-phosphoglycolate: step 1/1. In terms of biological role, specifically catalyzes the dephosphorylation of 2-phosphoglycolate. Is involved in the dissimilation of the intracellular 2-phosphoglycolate formed during the DNA repair of 3'-phosphoglycolate ends, a major class of DNA lesions induced by oxidative stress. In Nitrosospira multiformis (strain ATCC 25196 / NCIMB 11849 / C 71), this protein is Phosphoglycolate phosphatase.